Here is a 247-residue protein sequence, read N- to C-terminus: Large ribosomal subunit protein uL30 (247 aa).

M1 bears the N-acetylmethionine mark. Tandem repeats lie at residues 7–17 (KKKVPAVPETL), 18–29 (KKKRRNFAELKI), 30–41 (KRLRKKFAQKML), and 42–53 (RKARRKLIYEKA). The interval 7-53 (KKKVPAVPETLKKKRRNFAELKIKRLRKKFAQKMLRKARRKLIYEKA) is 4 X 12 AA tandem repeats. At T16 the chain carries Phosphothreonine. K123 bears the N6-acetyllysine mark. K126 is modified (N6-succinyllysine). Y138 is subject to Phosphotyrosine.

It belongs to the universal ribosomal protein uL30 family. As to quaternary structure, component of the large ribosomal subunit. Homodimer. Interacts with DHX33.

Its subcellular location is the cytoplasm. In terms of biological role, component of the large ribosomal subunit. The ribosome is a large ribonucleoprotein complex responsible for the synthesis of proteins in the cell. Binds to G-rich structures in 28S rRNA and in mRNAs. Plays a regulatory role in the translation apparatus; inhibits cell-free translation of mRNAs. This is Large ribosomal subunit protein uL30 (RPL7) from Pongo abelii (Sumatran orangutan).